The sequence spans 432 residues: Cysteine desulfurase, mitosomal (432 aa).

Residues 102-103 (AT), Gln212, and 232-234 (CAH) contribute to the pyridoxal 5'-phosphate site. Residue Lys235 is modified to N6-(pyridoxal phosphate)lysine. A pyridoxal 5'-phosphate-binding site is contributed by Thr272. Cys357 acts as the Cysteine persulfide intermediate in catalysis. Cys357 is a binding site for [2Fe-2S] cluster.

The protein belongs to the class-V pyridoxal-phosphate-dependent aminotransferase family. NifS/IscS subfamily. The cofactor is pyridoxal 5'-phosphate.

Its subcellular location is the mitosome. It carries out the reaction (sulfur carrier)-H + L-cysteine = (sulfur carrier)-SH + L-alanine. In terms of biological role, catalyzes the removal of elemental sulfur from cysteine to produce alanine. It supplies the inorganic sulfur for iron-sulfur (Fe-S) clusters in mitosomes. The protein is Cysteine desulfurase, mitosomal of Encephalitozoon cuniculi (strain GB-M1) (Microsporidian parasite).